Reading from the N-terminus, the 312-residue chain is uncharacterized protein (312 aa).

The interval 95-119 is disordered; that stretch reads EKRRENPPKLTLPPLPPPAEERKKP.

The protein localises to the plastid. The protein resides in the chloroplast. This is an uncharacterized protein from Chlamydomonas moewusii (Chlamydomonas eugametos).